Here is a 307-residue protein sequence, read N- to C-terminus: Pseudouridine-5'-phosphate glycosidase (307 aa).

Residue glutamate 28 is the Proton donor of the active site. Substrate contacts are provided by lysine 89 and valine 109. A Mn(2+)-binding site is contributed by aspartate 141. 143–145 (SAD) lines the substrate pocket. The active-site Nucleophile is the lysine 162.

Belongs to the pseudouridine-5'-phosphate glycosidase family. As to quaternary structure, homotrimer. It depends on Mn(2+) as a cofactor.

The enzyme catalyses D-ribose 5-phosphate + uracil = psi-UMP + H2O. Its function is as follows. Catalyzes the reversible cleavage of pseudouridine 5'-phosphate (PsiMP) to ribose 5-phosphate and uracil. Functions biologically in the cleavage direction, as part of a pseudouridine degradation pathway. This Alkaliphilus metalliredigens (strain QYMF) protein is Pseudouridine-5'-phosphate glycosidase.